The primary structure comprises 447 residues: Phosphoglucosamine mutase (447 aa).

The Phosphoserine intermediate role is filled by Ser102. The Mg(2+) site is built by Ser102, Asp241, Asp243, and Asp245. A Phosphoserine modification is found at Ser102.

This sequence belongs to the phosphohexose mutase family. It depends on Mg(2+) as a cofactor. Activated by phosphorylation.

The catalysed reaction is alpha-D-glucosamine 1-phosphate = D-glucosamine 6-phosphate. In terms of biological role, catalyzes the conversion of glucosamine-6-phosphate to glucosamine-1-phosphate. The protein is Phosphoglucosamine mutase of Pseudoalteromonas atlantica (strain T6c / ATCC BAA-1087).